The following is a 2054-amino-acid chain: Multiple PDZ domain protein (2054 aa).

The L27 domain occupies 3-63 (ETIDKNRALQ…SLQQLKDQVN (61 aa)). A PDZ 1 domain is found at 138-225 (IFELLKPPCG…TIQLVIARGS (88 aa)). Ser231 carries the post-translational modification Phosphoserine. PDZ domains are found at residues 258-338 (TIEL…ARGA), 377-463 (DVEL…MRKG), 545-626 (VAHV…CRRT), and 692-778 (AIEL…VAKP). A phosphoserine mark is found at Ser782 and Ser1065. The PDZ 6 domain maps to 995-1076 (TVTIAKGSSS…IGPDIKITYV (82 aa)). The disordered stretch occupies residues 1110 to 1129 (PELPEREEGEGEESELQNAA). Residues 1138-1230 (RVELWREPSK…PVVFMVQSIV (93 aa)) enclose the PDZ 7 domain. Residue Arg1157 is modified to Omega-N-methylarginine. A compositionally biased stretch (polar residues) spans 1261-1273 (LQLTSDKAPSQSE). Positions 1261–1312 (LQLTSDKAPSQSESESEKATLCSVPSSSPSVFSEMSSDYAQPSATTVAEDED) are disordered. The span at 1283 to 1297 (SVPSSSPSVFSEMSS) shows a compositional bias: low complexity. A PDZ 8 domain is found at 1337–1420 (MIELEKGHSG…KVKIIFIRNA (84 aa)). Residues 1433–1454 (AADPLPSTSESPQNKEVEPSIT) form a disordered region. The PDZ 9 domain maps to 1470-1551 (HLELPKDQGG…TVKLTVGAEN (82 aa)). A disordered region spans residues 1560–1594 (AAVTASGERKDSSQTPAVPAPDLEPIPSTSRSSTP). PDZ domains are found at residues 1613–1696 (TIEI…YRDE) and 1709–1791 (TVEL…GRIK). The interval 1795-1834 (FHSERRPSQSSQVSESSLSSFSLPRSGIHTSESSESSAKK) is disordered. A phosphoserine mark is found at Ser1802 and Ser1808. Positions 1802–1834 (SQSSQVSESSLSSFSLPRSGIHTSESSESSAKK) are enriched in low complexity. PDZ domains are found at residues 1846-1932 (TVEI…VAGG) and 1971-2054 (TITL…MVLS).

As to quaternary structure, interacts with F11R/JAM, CLDN1, NG2, CXADR, CRB1, MPP4 and PALS1, HTR2A, HTR2B, PLEKHA1/TAPP1 and PLEKHA2/TAPP2. Interacts with CXADR. Interacts with HTR2C, CLDN5, DLG4, GRIN1, SYNGAP1, CAMK2A and CAMK2B. Interacts with FAT4 (via cytoplasmic domain). Interacts with DLL1. In terms of tissue distribution, abundant in all cerebral cortical layers, especially the piriform cortex, the pyramidal cells of the CA1-CA3 subfields of the hippocampus, as well as the granular layer of the dentate gyrus. Detected in the internal granular layer and the mitral cell layer of the olfactory bulb; in the medial habenular nucleus; and in amygdaloid, thalamic, hypothalamic, and pontine nuclei. In the cerebellum, found at high levels in the granular layer. Detected in the lateral ventricle. Expression overlaps with 5-HT2C receptor expression in all regions of the brain including the choroid plexus, where 5-HT2C receptors are highly enriched.

It localises to the endomembrane system. It is found in the cell junction. The protein resides in the tight junction. The protein localises to the synapse. Its subcellular location is the apical cell membrane. It localises to the postsynaptic density. It is found in the cell projection. The protein resides in the dendrite. The protein localises to the synaptosome. Functionally, member of the NMDAR signaling complex that may play a role in control of AMPAR potentiation and synaptic plasticity in excitatory synapses. Promotes clustering of HT2RC at the cell surface. In Rattus norvegicus (Rat), this protein is Multiple PDZ domain protein (Mpdz).